The chain runs to 402 residues: Zinc finger CCHC domain-containing protein 12 (402 aa).

Residues 308 to 341 (IDSPHNSRAQFPSTSGGSGYKNNGPGEMRRARKR) are disordered. Over residues 311–322 (PHNSRAQFPSTS) the composition is skewed to polar residues. The CCHC-type zinc finger occupies 345–362 (IRCSYCGEEGHSKETCDN).

This sequence belongs to the ZCCHC12 family. Interacts with SMAD1 and CREB-binding protein (CBP). Forms a protein-DNA complex through its association with SMAD1.

Its function is as follows. Transcriptional coactivator in the bone morphogenetic protein (BMP)-signaling pathway. It positively modulates BMP signaling by interacting with SMAD1 and associating with CBP in the transcription complex. It contributes to the BMP-induced enhancement of cholinergic-neuron-specific gene expression. This is Zinc finger CCHC domain-containing protein 12 (ZCCHC12) from Homo sapiens (Human).